The sequence spans 435 residues: Tol-Pal system protein TolB (435 aa).

An N-terminal signal peptide occupies residues 1 to 28; that stretch reads MVKCSLIRALMVIAGLIGAAAFTTPANA. Residues 288–310 form a disordered region; sequence STAAIDTSPSYSPDGARVSFESD.

This sequence belongs to the TolB family. The Tol-Pal system is composed of five core proteins: the inner membrane proteins TolA, TolQ and TolR, the periplasmic protein TolB and the outer membrane protein Pal. They form a network linking the inner and outer membranes and the peptidoglycan layer.

The protein resides in the periplasm. In terms of biological role, part of the Tol-Pal system, which plays a role in outer membrane invagination during cell division and is important for maintaining outer membrane integrity. The polypeptide is Tol-Pal system protein TolB (Rhizobium leguminosarum bv. trifolii (strain WSM2304)).